Consider the following 147-residue polypeptide: PTPN13-like protein, Y-linked (147 aa).

Expressed in testis. Detected in spermatocytes, spermatids and spermatozoa (at protein level).

The chain is PTPN13-like protein, Y-linked (PRY) from Homo sapiens (Human).